A 216-amino-acid polypeptide reads, in one-letter code: Chaperone protein TorD (216 aa).

The protein belongs to the TorD/DmsD family. TorD subfamily.

The protein resides in the cytoplasm. Its function is as follows. Involved in the biogenesis of TorA. Acts on TorA before the insertion of the molybdenum cofactor and, as a result, probably favors a conformation of the apoenzyme that is competent for acquiring the cofactor. In Photobacterium profundum (strain SS9), this protein is Chaperone protein TorD.